Reading from the N-terminus, the 666-residue chain is MSVRRLTVCIVGAGPRGLSVLERFCAHERKSASHPAVTVHVVDPARPGAGRVWRTGQPRQLLMNTVASQVTVFTDGSVDMAGPVEAGPSLHEWARELAALTPVEELLGGHDDATLAEARALGADSYPTRAFYGCYLEEMFRRVVCGAPAHLEVRVHRSTAVSLADETPGSGGAQSLLLADGTRLAGLDAVVLALGHVRAEEPGAPDPRAAALGLAHFPPANPADLDLSGIAPGTPVLLRGLGLNFFDHMALFTLGRGGAFSRRPHGLRYHPSGLEPRLYAGSRRGVPYHARGENEKGVDGRHTPLLLTPERIAELTGRHREGPGLSFLRTLWPLIAREVECVYYGTLLASRGRAAERDAFVTAYLAGGDDTDRGGVLERFGIGPADRWCWERTASPHPRHGFTGPDGHRRWLLEHLAQDVRRARAGNVSDPHKAALDVLRDLRNEIRLVVDHGGLDGLSHRDDLDGWYTGLNAFLSIGPPASRIEEMAALIEAGVLDVVGPGLEVDIDEADAAFVARSPLVPGRPVRAHVLIEARLPVTDLRRTADPLLRDLLRSGQCRSYRIPAGRAPEGYETGGLEVTRRPYRLVDALGRAHPRRFAFGVPTEAVHWVTAAGARPGVNSVTLGDADAIAHAVASLTPAAAPRLPAYEDPGVRCPSDDRLTEVTA.

Positions 645–666 (LPAYEDPGVRCPSDDRLTEVTA) are disordered. Residues 656-666 (PSDDRLTEVTA) show a composition bias toward basic and acidic residues.

It belongs to the nitrosuccinic acid synthase family. The cofactor is FAD.

It catalyses the reaction L-aspartate + 3 NADPH + 3 O2 + 2 H(+) = 2-nitrobutanedioate + 3 NADP(+) + 4 H2O. It participates in antibiotic biosynthesis. Part of a gene cluster involved in the biosynthesis of cremeomycin, a light-sensitive o-diazoquinone with antibacterial and antiproliferative effects. Catalyzes the iterative oxidation of L-aspartic acid to nitrosuccinic acid (2-nitrobutanedioate) via N-hydroxyaspartic acid and nitrososuccinic acid. This Streptomyces cremeus protein is L-aspartate N-monooxygenase (nitrosuccinate-forming).